We begin with the raw amino-acid sequence, 398 residues long: ATP-dependent RNA helicase eIF4A (398 aa).

A Q motif motif is present at residues 25–53; the sequence is DSFDTMNLKPELLRGVYAYGFERPSAIQQ. Residues 56–226 enclose the Helicase ATP-binding domain; it reads IMPVIKGHDV…TKFMRDPVRI (171 aa). Residue 69-76 coordinates ATP; sequence AQSGTGKT. Residues 174 to 177 carry the DEAD box motif; the sequence is DEAD. A Helicase C-terminal domain is found at 237 to 398; sequence GIKQFYIAVE…EMPMNVADLI (162 aa).

This sequence belongs to the DEAD box helicase family. eIF4A subfamily. In terms of assembly, component of the eIF4F complex, which composition varies with external and internal environmental conditions. It is composed of at least eIF4A, eIF4E and eIF4G.

The protein resides in the cytoplasm. The catalysed reaction is ATP + H2O = ADP + phosphate + H(+). ATP-dependent RNA helicase which is a subunit of the eIF4F complex involved in cap recognition and is required for mRNA binding to ribosome. In the current model of translation initiation, eIF4A unwinds RNA secondary structures in the 5'-UTR of mRNAs which is necessary to allow efficient binding of the small ribosomal subunit, and subsequent scanning for the initiator codon. In Sclerotinia sclerotiorum (strain ATCC 18683 / 1980 / Ss-1) (White mold), this protein is ATP-dependent RNA helicase eIF4A (tif1).